The primary structure comprises 145 residues: Large ribosomal subunit protein uL11 (145 aa).

Belongs to the universal ribosomal protein uL11 family. As to quaternary structure, part of the ribosomal stalk of the 50S ribosomal subunit. Interacts with L10 and the large rRNA to form the base of the stalk. L10 forms an elongated spine to which L12 dimers bind in a sequential fashion forming a multimeric L10(L12)X complex. In terms of processing, one or more lysine residues are methylated.

Its function is as follows. Forms part of the ribosomal stalk which helps the ribosome interact with GTP-bound translation factors. The protein is Large ribosomal subunit protein uL11 of Rickettsia peacockii (strain Rustic).